The following is a 623-amino-acid chain: Glutathione import ATP-binding protein GsiA (623 aa).

ABC transporter domains are found at residues 15 to 269 (VENL…RALL) and 314 to 564 (LRVR…RKLL). Residues 49 to 56 (GESGSGKS) and 357 to 364 (GESGSGKS) contribute to the ATP site.

It belongs to the ABC transporter superfamily. Glutathione importer (TC 3.A.1.5.11) family. As to quaternary structure, the complex is composed of two ATP-binding proteins (GsiA), two transmembrane proteins (GsiC and GsiD) and a solute-binding protein (GsiB).

Its subcellular location is the cell inner membrane. It carries out the reaction glutathione(out) + ATP + H2O = glutathione(in) + ADP + phosphate + H(+). In terms of biological role, part of the ABC transporter complex GsiABCD involved in glutathione import. Responsible for energy coupling to the transport system. This is Glutathione import ATP-binding protein GsiA from Shigella flexneri serotype 5b (strain 8401).